A 485-amino-acid chain; its full sequence is N-succinylglutamate 5-semialdehyde dehydrogenase (485 aa).

220–225 (GSANTG) contacts NAD(+). Residues glutamate 243 and cysteine 278 contribute to the active site.

This sequence belongs to the aldehyde dehydrogenase family. AstD subfamily.

The catalysed reaction is N-succinyl-L-glutamate 5-semialdehyde + NAD(+) + H2O = N-succinyl-L-glutamate + NADH + 2 H(+). Its pathway is amino-acid degradation; L-arginine degradation via AST pathway; L-glutamate and succinate from L-arginine: step 4/5. Its function is as follows. Catalyzes the NAD-dependent reduction of succinylglutamate semialdehyde into succinylglutamate. The protein is N-succinylglutamate 5-semialdehyde dehydrogenase of Vibrio parahaemolyticus serotype O3:K6 (strain RIMD 2210633).